Consider the following 88-residue polypeptide: RQC P-site tRNA stabilizing factor (88 aa).

In terms of domain architecture, S4 RNA-binding spans methionine 1–valine 67.

Belongs to the RqcP family. In terms of assembly, associates with stalled 50S ribosomal subunits. Binds to RqcH, 23S rRNA and the P-site tRNA. Does not require RqcH for association with 50S subunits.

Functionally, key component of the ribosome quality control system (RQC), a ribosome-associated complex that mediates the extraction of incompletely synthesized nascent chains from stalled ribosomes and their subsequent degradation. RqcH recruits Ala-charged tRNA, and with RqcP directs the elongation of stalled nascent chains on 50S ribosomal subunits, leading to non-templated C-terminal alanine extensions (Ala tail). The Ala tail promotes nascent chain degradation. RqcP is associated with the translocation-like movement of the peptidyl-tRNA from the A-site into the P-site. The sequence is that of RQC P-site tRNA stabilizing factor from Halalkalibacterium halodurans (strain ATCC BAA-125 / DSM 18197 / FERM 7344 / JCM 9153 / C-125) (Bacillus halodurans).